The primary structure comprises 464 residues: Fumarate hydratase class II (464 aa).

Substrate-binding positions include 96–98, 127–130, 137–139, and threonine 185; these read SGT, HPND, and SSN. The Proton donor/acceptor role is filled by histidine 186. Serine 316 is a catalytic residue. Residues serine 317 and 322-324 each bind substrate; that span reads KVN.

The protein belongs to the class-II fumarase/aspartase family. Fumarase subfamily. As to quaternary structure, homotetramer.

The protein resides in the cytoplasm. The enzyme catalyses (S)-malate = fumarate + H2O. The protein operates within carbohydrate metabolism; tricarboxylic acid cycle; (S)-malate from fumarate: step 1/1. In terms of biological role, involved in the TCA cycle. Catalyzes the stereospecific interconversion of fumarate to L-malate. The polypeptide is Fumarate hydratase class II (Pseudomonas syringae pv. tomato (strain ATCC BAA-871 / DC3000)).